The primary structure comprises 284 residues: MKYVGAHVSASGGLANAAIRAAEIEATAFALFTKNQRQWRAAPLSDETIAEFKAACEKYHFGPGQILPHDSYLINLGHPVEEALEKSRDAFIDEMTRCQQLGLTLLNFHPGSHLQQIPEEECLARIAESINIALAKTEGVTAVIENTAGQGSNLGFKFEHLAAIIDGVEDKSRVGVCIDTCHAFAAGYDLRSAEACEKTFAAFERIVGFQYLRGMHLNDAKSAFGSRVDRHHSLGEGNIGHDCFSWIMQDSRFDGIPLILETINPDIWAEEIAWLRAQQIAEVA.

Residues His-69, His-109, Glu-145, Asp-179, His-182, His-216, Asp-229, His-231, and Glu-261 each coordinate Zn(2+).

This sequence belongs to the AP endonuclease 2 family. The cofactor is Zn(2+).

The enzyme catalyses Endonucleolytic cleavage to 5'-phosphooligonucleotide end-products.. Endonuclease IV plays a role in DNA repair. It cleaves phosphodiester bonds at apurinic or apyrimidinic (AP) sites, generating a 3'-hydroxyl group and a 5'-terminal sugar phosphate. This is Probable endonuclease 4 from Klebsiella pneumoniae subsp. pneumoniae (strain ATCC 700721 / MGH 78578).